Reading from the N-terminus, the 648-residue chain is Pesticidal crystal protein Cry19Aa (648 aa).

This sequence belongs to the delta endotoxin family.

Functionally, promotes colloidosmotic lysis by binding to the midgut epithelial cells of mosquitos. The chain is Pesticidal crystal protein Cry19Aa (cry19Aa) from Bacillus thuringiensis subsp. jegathesan.